A 504-amino-acid chain; its full sequence is Acid phosphatase A (504 aa).

The N-terminal stretch at 1–22 (MYTLLDILKGLPLLAVAAIASA) is a signal peptide. N-linked (GlcNAc...) asparagine glycosylation is found at Asn-84, Asn-112, Asn-168, Asn-260, Asn-415, Asn-450, and Asn-474.

This sequence belongs to the metallophosphoesterase superfamily. Purple acid phosphatase family. As to quaternary structure, monomer.

The protein resides in the secreted. It catalyses the reaction a phosphate monoester + H2O = an alcohol + phosphate. Functionally, acid phosphatase involved in the regulation of fungal phenotypic traits and virulence in C.parasitica. The chain is Acid phosphatase A from Cryphonectria parasitica (strain ATCC 38755 / EP155).